A 602-amino-acid chain; its full sequence is uncharacterized protein (602 aa).

N-linked (GlcNAc...) asparagine glycans are attached at residues Asn-305, Asn-497, and Asn-577.

N-glycosylated.

It is found in the vacuole. This is an uncharacterized protein from Saccharomyces cerevisiae (strain ATCC 204508 / S288c) (Baker's yeast).